The primary structure comprises 1678 residues: Nuclear pore complex protein Nup98-Nup96 (1678 aa).

Residues 1 to 11 (MFGQNKSFGSS) show a composition bias toward low complexity. 5 disordered regions span residues 1 to 41 (MFGQ…QPAN), 68 to 100 (SSIF…FGST), 301 to 366 (TTGS…GAPA), 441 to 473 (FGNT…TQAT), and 603 to 631 (SKEA…RSVH). Positions 12–22 (SFGGGSSGSGL) are enriched in gly residues. Low complexity-rich tracts occupy residues 23–38 (FGQN…LFGQ) and 73–83 (SPQQPQNNQSS). Over residues 306-329 (LFGNQQPQTNTGGSLFGNTQNQNQ) the composition is skewed to polar residues. Residues 345–366 (FGQAQQQPQQQSSGFSFGGAPA) show a composition bias toward low complexity. 2 stretches are compositionally biased toward polar residues: residues 456-473 (SQPQ…TQAT) and 615-628 (RNST…LTNR). Residues 777–919 (KPDYFSLPTI…GSWVFRVDHF (143 aa)) form the Peptidase S59 domain. Residue S920 is the Nucleophile of the active site.

The protein belongs to the nucleoporin GLFG family. Part of the NPC. In terms of processing, the Nup98 and Nup96 chains are autoproteolytically processed from a single precursor protein.

It localises to the cytoplasmic granule. The protein localises to the nucleus membrane. It is found in the nucleus. The protein resides in the nuclear pore complex. Its subcellular location is the nucleus envelope. It localises to the chromosome. In terms of biological role, nup98 and Nup96 play a role in the bidirectional transport across the nucleoporin complex (NPC). Required for the nuclear import of hcp-4 during mitotic prophase, this step is essential for centrosome assembly and resolution. Regulates nucleoporin npp-5 localization to the nuclear membrane during interphase and to kinetochores during metaphase. Has a role in P granule integrity; may promote the 'liquid phase' of P granules by increasing the number of interacting RNA-protein complexes. Binds nos-2 mRNA, probably indirectly, and promotes its accumulation in P granules. This is Nuclear pore complex protein Nup98-Nup96 from Caenorhabditis elegans.